Reading from the N-terminus, the 21-residue chain is Hydroxypicolinic acid-activating enzyme (21 aa).

Involved in etamycin biosynthesis. The sequence is that of Hydroxypicolinic acid-activating enzyme from Streptomyces griseoviridis.